Reading from the N-terminus, the 470-residue chain is tRNA-2-methylthio-N(6)-dimethylallyladenosine synthase (470 aa).

An MTTase N-terminal domain is found at 1-116 (MTYTVRTYGC…LPALLRRSRH (116 aa)). The [4Fe-4S] cluster site is built by Cys-10, Cys-45, Cys-79, Cys-153, Cys-157, and Cys-160. Positions 139–369 (RESNYSAWVS…LDLQNRIALE (231 aa)) constitute a Radical SAM core domain. One can recognise a TRAM domain in the interval 372 to 439 (RKLIGKEVEL…PYHLIGDNAL (68 aa)).

The protein belongs to the methylthiotransferase family. MiaB subfamily. As to quaternary structure, monomer. [4Fe-4S] cluster serves as cofactor.

Its subcellular location is the cytoplasm. It carries out the reaction N(6)-dimethylallyladenosine(37) in tRNA + (sulfur carrier)-SH + AH2 + 2 S-adenosyl-L-methionine = 2-methylsulfanyl-N(6)-dimethylallyladenosine(37) in tRNA + (sulfur carrier)-H + 5'-deoxyadenosine + L-methionine + A + S-adenosyl-L-homocysteine + 2 H(+). In terms of biological role, catalyzes the methylthiolation of N6-(dimethylallyl)adenosine (i(6)A), leading to the formation of 2-methylthio-N6-(dimethylallyl)adenosine (ms(2)i(6)A) at position 37 in tRNAs that read codons beginning with uridine. The chain is tRNA-2-methylthio-N(6)-dimethylallyladenosine synthase from Tropheryma whipplei (strain Twist) (Whipple's bacillus).